An 87-amino-acid chain; its full sequence is Large ribosomal subunit protein bL31B (87 aa).

It belongs to the bacterial ribosomal protein bL31 family. Type B subfamily. Part of the 50S ribosomal subunit.

The protein is Large ribosomal subunit protein bL31B of Paraburkholderia phymatum (strain DSM 17167 / CIP 108236 / LMG 21445 / STM815) (Burkholderia phymatum).